The primary structure comprises 332 residues: Glycerol-3-phosphate dehydrogenase [NAD(P)+] (332 aa).

Positions 10, 11, 31, 32, and 105 each coordinate NADPH. Sn-glycerol 3-phosphate-binding residues include lysine 105, glycine 136, and serine 138. Alanine 140 contributes to the NADPH binding site. Residues lysine 191, aspartate 244, serine 254, arginine 255, and asparagine 256 each contribute to the sn-glycerol 3-phosphate site. The active-site Proton acceptor is the lysine 191. Position 255 (arginine 255) interacts with NADPH. Residues valine 279 and glutamate 281 each coordinate NADPH.

This sequence belongs to the NAD-dependent glycerol-3-phosphate dehydrogenase family.

The protein resides in the cytoplasm. It carries out the reaction sn-glycerol 3-phosphate + NAD(+) = dihydroxyacetone phosphate + NADH + H(+). The catalysed reaction is sn-glycerol 3-phosphate + NADP(+) = dihydroxyacetone phosphate + NADPH + H(+). It participates in membrane lipid metabolism; glycerophospholipid metabolism. In terms of biological role, catalyzes the reduction of the glycolytic intermediate dihydroxyacetone phosphate (DHAP) to sn-glycerol 3-phosphate (G3P), the key precursor for phospholipid synthesis. The sequence is that of Glycerol-3-phosphate dehydrogenase [NAD(P)+] from Prosthecochloris aestuarii (strain DSM 271 / SK 413).